The sequence spans 546 residues: Chaperonin GroEL (546 aa).

ATP-binding positions include 30 to 33 (TLGP), Lys-51, 87 to 91 (DGTTT), Gly-415, 479 to 481 (NAA), and Asp-495.

It belongs to the chaperonin (HSP60) family. As to quaternary structure, forms a cylinder of 14 subunits composed of two heptameric rings stacked back-to-back. Interacts with the co-chaperonin GroES.

The protein localises to the cytoplasm. The catalysed reaction is ATP + H2O + a folded polypeptide = ADP + phosphate + an unfolded polypeptide.. Functionally, together with its co-chaperonin GroES, plays an essential role in assisting protein folding. The GroEL-GroES system forms a nano-cage that allows encapsulation of the non-native substrate proteins and provides a physical environment optimized to promote and accelerate protein folding. The sequence is that of Chaperonin GroEL from Xanthomonas axonopodis pv. citri (strain 306).